Consider the following 280-residue polypeptide: GTP-binding protein rhoC (280 aa).

Positions 13 to 59 (TSRRHSLVTPPPSVAPRQNRMRSQSVRVSNGTVSTDNSMSSGRVSEA) are disordered. Polar residues predominate over residues 33–59 (MRSQSVRVSNGTVSTDNSMSSGRVSEA). 76–83 (GDGGCGKT) serves as a coordination point for GTP. The Effector region motif lies at 98–106 (YVPTVFENY). Residues 125–129 (DTAGQ) and 183–186 (LKSD) each bind GTP. Positions 251–275 (WDTRLPSSSGKPGGKPIGGKKIKKR) are disordered. Cysteine 277 carries the cysteine methyl ester modification. Cysteine 277 is lipidated: S-geranylgeranyl cysteine. Residues 278 to 280 (KIL) constitute a propeptide, removed in mature form.

The protein belongs to the small GTPase superfamily. Rho family.

The protein resides in the cell membrane. The sequence is that of GTP-binding protein rhoC (rhoC) from Emericella nidulans (strain FGSC A4 / ATCC 38163 / CBS 112.46 / NRRL 194 / M139) (Aspergillus nidulans).